Here is a 178-residue protein sequence, read N- to C-terminus: Large ribosomal subunit protein uL10 (178 aa).

Belongs to the universal ribosomal protein uL10 family. As to quaternary structure, part of the ribosomal stalk of the 50S ribosomal subunit. The N-terminus interacts with L11 and the large rRNA to form the base of the stalk. The C-terminus forms an elongated spine to which L12 dimers bind in a sequential fashion forming a multimeric L10(L12)X complex.

Forms part of the ribosomal stalk, playing a central role in the interaction of the ribosome with GTP-bound translation factors. This is Large ribosomal subunit protein uL10 from Dictyoglomus turgidum (strain DSM 6724 / Z-1310).